We begin with the raw amino-acid sequence, 163 residues long: Nucleotide-binding protein NFA_51200 (163 aa).

The protein belongs to the YajQ family.

In terms of biological role, nucleotide-binding protein. In Nocardia farcinica (strain IFM 10152), this protein is Nucleotide-binding protein NFA_51200.